Here is an 888-residue protein sequence, read N- to C-terminus: Calcium-transporting ATPase 1 (888 aa).

Helical transmembrane passes span 53–75 (IFAQ…SAFV), 79–97 (ADAS…IGVV), 246–266 (VGKY…LIGF), and 283–303 (AVAA…AIGV). Positions 284, 285, 287, and 289 each coordinate Ca(2+). Aspartate 331 (4-aspartylphosphate intermediate) is an active-site residue. Transmembrane regions (helical) follow at residues 675–695 (ILFL…AILL), 703–723 (PIHI…SLGV), 747–767 (VPFL…AFIA), 791–811 (LLHA…VHSF), 831–851 (LVFS…IPPL), and 865–885 (WGFV…IKLA). Positions 710 and 714 each coordinate Ca(2+).

The protein belongs to the cation transport ATPase (P-type) (TC 3.A.3) family. Type IIA subfamily.

Its subcellular location is the cell membrane. It catalyses the reaction Ca(2+)(in) + ATP + H2O = Ca(2+)(out) + ADP + phosphate + H(+). Inhibited by cyclopiazonic acid (CPA). Functionally, catalyzes the hydrolysis of ATP coupled with the transport of calcium. The protein is Calcium-transporting ATPase 1 of Bacillus cereus (strain ATCC 10987 / NRS 248).